We begin with the raw amino-acid sequence, 145 residues long: CASP-like protein SELMODRAFT_406854 (145 aa).

The Cytoplasmic segment spans residues 1 to 31 (MGVASQSSVANEAGAAPEASIQQTLRGFSSP). A helical membrane pass occupies residues 32 to 52 (TSLLLRIATAVLCTLTLAFLV). Over 53 to 75 (TSKERKEIASIDIVAIWSNSKAL) the chain is Extracellular. A helical membrane pass occupies residues 76 to 96 (IFLAVVSGICLGYSLLHAAVF). At 97 to 112 (LVMLSGNRKPLARKKA) the chain is on the cytoplasmic side. The chain crosses the membrane as a helical span at residues 113–133 (LDWMVFLADQVFFKIFCWFSI). Residues 134–145 (RVSSRRSKAGFV) are Extracellular-facing.

The protein belongs to the Casparian strip membrane proteins (CASP) family. As to quaternary structure, homodimer and heterodimers.

It is found in the cell membrane. The chain is CASP-like protein SELMODRAFT_406854 from Selaginella moellendorffii (Spikemoss).